We begin with the raw amino-acid sequence, 354 residues long: Protein RecA (354 aa).

65 to 72 (GPESSGKT) is a binding site for ATP.

Belongs to the RecA family.

The protein localises to the cytoplasm. Can catalyze the hydrolysis of ATP in the presence of single-stranded DNA, the ATP-dependent uptake of single-stranded DNA by duplex DNA, and the ATP-dependent hybridization of homologous single-stranded DNAs. It interacts with LexA causing its activation and leading to its autocatalytic cleavage. This Vibrio cholerae serotype O1 (strain ATCC 39315 / El Tor Inaba N16961) protein is Protein RecA.